Consider the following 354-residue polypeptide: tRNA N6-adenosine threonylcarbamoyltransferase (354 aa).

Fe cation-binding residues include His111 and His115. Substrate is bound by residues 134 to 138, Asp167, Gly180, and Asn279; that span reads LVSGG. A Fe cation-binding site is contributed by Asp319.

This sequence belongs to the KAE1 / TsaD family. The cofactor is Fe(2+).

The protein resides in the cytoplasm. The enzyme catalyses L-threonylcarbamoyladenylate + adenosine(37) in tRNA = N(6)-L-threonylcarbamoyladenosine(37) in tRNA + AMP + H(+). Required for the formation of a threonylcarbamoyl group on adenosine at position 37 (t(6)A37) in tRNAs that read codons beginning with adenine. Is involved in the transfer of the threonylcarbamoyl moiety of threonylcarbamoyl-AMP (TC-AMP) to the N6 group of A37, together with TsaE and TsaB. TsaD likely plays a direct catalytic role in this reaction. The sequence is that of tRNA N6-adenosine threonylcarbamoyltransferase from Neisseria meningitidis serogroup B (strain ATCC BAA-335 / MC58).